The primary structure comprises 889 residues: Translation initiation factor IF-2 (889 aa).

The segment at 158 to 296 is disordered; sequence LKEKQEKRRQ…KYKSDELQSQ (139 aa). A compositionally biased stretch (low complexity) spans 209 to 228; it reads AAATPATSTAPATTSTTAAT. The span at 238–270 shows a compositional bias: basic and acidic residues; sequence VKPEEKGEKKKKPTKQDAWKDEPVKRREPKARG. Positions 391 to 560 constitute a tr-type G domain; it reads PRAPVVTVMG…LLQAEVLELK (170 aa). The G1 stretch occupies residues 400 to 407; the sequence is GHVDHGKT. 400-407 is a GTP binding site; it reads GHVDHGKT. Residues 425 to 429 form a G2 region; that stretch reads GITQH. Residues 446–449 form a G3 region; sequence DTPG. Residues 446 to 450 and 500 to 503 contribute to the GTP site; these read DTPGH and NKMD. The G4 stretch occupies residues 500 to 503; the sequence is NKMD. Residues 536–538 form a G5 region; sequence SAK.

Belongs to the TRAFAC class translation factor GTPase superfamily. Classic translation factor GTPase family. IF-2 subfamily.

It localises to the cytoplasm. In terms of biological role, one of the essential components for the initiation of protein synthesis. Protects formylmethionyl-tRNA from spontaneous hydrolysis and promotes its binding to the 30S ribosomal subunits. Also involved in the hydrolysis of GTP during the formation of the 70S ribosomal complex. This chain is Translation initiation factor IF-2, found in Nitrosomonas europaea (strain ATCC 19718 / CIP 103999 / KCTC 2705 / NBRC 14298).